Here is a 152-residue protein sequence, read N- to C-terminus: Small ribosomal subunit protein uS15 (152 aa).

Basic residues predominate over residues 1–11; the sequence is MAKMHTKRKGK. Positions 1–23 are disordered; that stretch reads MAKMHTKRKGKSSSTRPIRTDPP.

It belongs to the universal ribosomal protein uS15 family. Part of the 30S ribosomal subunit.

The protein is Small ribosomal subunit protein uS15 of Methanosarcina acetivorans (strain ATCC 35395 / DSM 2834 / JCM 12185 / C2A).